The following is a 130-amino-acid chain: Small ribosomal subunit protein uS9 (130 aa).

Belongs to the universal ribosomal protein uS9 family.

In Shewanella baltica (strain OS155 / ATCC BAA-1091), this protein is Small ribosomal subunit protein uS9.